We begin with the raw amino-acid sequence, 153 residues long: Ribosomal RNA large subunit methyltransferase H (153 aa).

Positions 71 and 102 each coordinate S-adenosyl-L-methionine.

The protein belongs to the RNA methyltransferase RlmH family. Homodimer.

Its subcellular location is the cytoplasm. It catalyses the reaction pseudouridine(1915) in 23S rRNA + S-adenosyl-L-methionine = N(3)-methylpseudouridine(1915) in 23S rRNA + S-adenosyl-L-homocysteine + H(+). Its function is as follows. Specifically methylates the pseudouridine at position 1915 (m3Psi1915) in 23S rRNA. The protein is Ribosomal RNA large subunit methyltransferase H of Anaeromyxobacter dehalogenans (strain 2CP-1 / ATCC BAA-258).